Consider the following 132-residue polypeptide: Small ribosomal subunit protein uS9 (132 aa).

This sequence belongs to the universal ribosomal protein uS9 family.

The polypeptide is Small ribosomal subunit protein uS9 (Mesomycoplasma hyopneumoniae (strain 232) (Mycoplasma hyopneumoniae)).